We begin with the raw amino-acid sequence, 151 residues long: UPF0178 protein PST_0536 (151 aa).

The protein belongs to the UPF0178 family.

The sequence is that of UPF0178 protein PST_0536 from Stutzerimonas stutzeri (strain A1501) (Pseudomonas stutzeri).